Consider the following 121-residue polypeptide: Prefoldin subunit beta (121 aa).

Belongs to the prefoldin subunit beta family. In terms of assembly, heterohexamer of two alpha and four beta subunits.

The protein localises to the cytoplasm. Molecular chaperone capable of stabilizing a range of proteins. Seems to fulfill an ATP-independent, HSP70-like function in archaeal de novo protein folding. This is Prefoldin subunit beta from Methanosphaerula palustris (strain ATCC BAA-1556 / DSM 19958 / E1-9c).